A 732-amino-acid chain; its full sequence is Nephrocystin-1 (732 aa).

A coiled-coil region spans residues 3–105; it reads ARRQRDPLQA…LQGLAVTISR (103 aa). Y46 is modified (phosphotyrosine; by FAK2). 2 disordered regions span residues 103 to 153 and 205 to 244; these read ISRE…KWST and TYLE…KQRT. Acidic residues-rich tracts occupy residues 115–145 and 210–236; these read TEEE…EKEE and YSEE…ETAD. S121, S123, and S126 each carry phosphoserine; by CK2. Residues 127 to 150 adopt a coiled-coil conformation; the sequence is EDSGGEEEDAEEEEEEKEENESHK. The 61-residue stretch at 152–212 folds into the SH3 domain; that stretch reads STGEEYIAVG…PRTYLEPYSE (61 aa). Y349 carries the post-translational modification Phosphotyrosine; by FAK2. Position 721 is a phosphotyrosine; by SRC (Y721).

It belongs to the nephrocystin-1 family. As to quaternary structure, interacts with BCAR1, PTK2B/PYK2 and tensin. Interacts with INVS and NPHP3. Interacts with PACS1; the interaction is dependent on NPHP1 phosphorylation by CK2. Interacts with KIF7. Interacts with AHI1 and TNK2. Interacts with NPHP4 in a complex containing NPHP1, NPHP4 and RPGRIP1L. Interacts with IQCB1; the interaction likely requires additional interactors. Interacts with ANKS3. Interacts with SPATA7. Interacts with FLNA. In terms of processing, phosphorylation by CK2 is required for the interaction with PACS1 and the targeting to the base region of cilia. Widespread expression, with highest levels in pituitary gland, spinal cord, thyroid gland, testis, skeletal muscle, lymph node and trachea. Weakly expressed in heart, kidney and pancreas. Expressed in nasal epithelial cells (at protein level). Expressed in the renal collecting duct (at protein level).

The protein resides in the cell junction. It localises to the adherens junction. It is found in the cell projection. The protein localises to the cilium. Its subcellular location is the cytoplasm. The protein resides in the cytoskeleton. It localises to the cilium axoneme. It is found in the tight junction. In terms of biological role, together with BCAR1 it may play a role in the control of epithelial cell polarity. Involved in the organization of apical junctions in kidney cells together with NPHP4 and RPGRIP1L/NPHP8. Does not seem to be strictly required for ciliogenesis. Seems to help to recruit PTK2B/PYK2 to cell matrix adhesions, thereby initiating phosphorylation of PTK2B/PYK2 and PTK2B/PYK2-dependent signaling. May play a role in the regulation of intraflagellar transport (IFT) during cilia assembly. Required for normal retina development. In connecting photoreceptor cilia influences the movement of some IFT proteins such as IFT88 and WDR19. Involved in spermatogenesis. This Homo sapiens (Human) protein is Nephrocystin-1 (NPHP1).